Consider the following 105-residue polypeptide: Small ribosomal subunit protein uS10 (105 aa).

The protein belongs to the universal ribosomal protein uS10 family. As to quaternary structure, part of the 30S ribosomal subunit.

Its function is as follows. Involved in the binding of tRNA to the ribosomes. This chain is Small ribosomal subunit protein uS10, found in Agathobacter rectalis (strain ATCC 33656 / DSM 3377 / JCM 17463 / KCTC 5835 / VPI 0990) (Eubacterium rectale).